Here is a 307-residue protein sequence, read N- to C-terminus: Probable aspartoacylase (307 aa).

Zn(2+) contacts are provided by His-13 and Glu-16. Substrate-binding positions include Arg-55 and 62–63 (NR). Residue His-105 participates in Zn(2+) binding. Residues Glu-163 and Tyr-276 each contribute to the substrate site.

The protein belongs to the AspA/AstE family. Aspartoacylase subfamily. The cofactor is Zn(2+).

The catalysed reaction is an N-acyl-L-aspartate + H2O = a carboxylate + L-aspartate. This Prochlorococcus marinus (strain SARG / CCMP1375 / SS120) protein is Probable aspartoacylase.